The following is a 246-amino-acid chain: Cell division protein ZapD (246 aa).

It belongs to the ZapD family. Interacts with FtsZ.

It is found in the cytoplasm. Cell division factor that enhances FtsZ-ring assembly. Directly interacts with FtsZ and promotes bundling of FtsZ protofilaments, with a reduction in FtsZ GTPase activity. In Vibrio vulnificus (strain CMCP6), this protein is Cell division protein ZapD.